The following is a 111-amino-acid chain: Pyrimidine/purine nucleoside phosphorylase 1 (111 aa).

This sequence belongs to the nucleoside phosphorylase PpnP family.

The enzyme catalyses a purine D-ribonucleoside + phosphate = a purine nucleobase + alpha-D-ribose 1-phosphate. The catalysed reaction is adenosine + phosphate = alpha-D-ribose 1-phosphate + adenine. It catalyses the reaction cytidine + phosphate = cytosine + alpha-D-ribose 1-phosphate. It carries out the reaction guanosine + phosphate = alpha-D-ribose 1-phosphate + guanine. The enzyme catalyses inosine + phosphate = alpha-D-ribose 1-phosphate + hypoxanthine. The catalysed reaction is thymidine + phosphate = 2-deoxy-alpha-D-ribose 1-phosphate + thymine. It catalyses the reaction uridine + phosphate = alpha-D-ribose 1-phosphate + uracil. It carries out the reaction xanthosine + phosphate = alpha-D-ribose 1-phosphate + xanthine. In terms of biological role, catalyzes the phosphorolysis of diverse nucleosides, yielding D-ribose 1-phosphate and the respective free bases. Can use uridine, adenosine, guanosine, cytidine, thymidine, inosine and xanthosine as substrates. Also catalyzes the reverse reactions. In Psychrobacter cryohalolentis (strain ATCC BAA-1226 / DSM 17306 / VKM B-2378 / K5), this protein is Pyrimidine/purine nucleoside phosphorylase 1.